The chain runs to 543 residues: Chaperonin GroEL 1 (543 aa).

ATP-binding positions include 29 to 32 (TLGP), K50, 86 to 90 (DGTTT), G414, and D493. Residues 524–543 (KEDKGAPAGMGGMPPGGGMY) are disordered. Residues 531-543 (AGMGGMPPGGGMY) are compositionally biased toward gly residues.

The protein belongs to the chaperonin (HSP60) family. Forms a cylinder of 14 subunits composed of two heptameric rings stacked back-to-back. Interacts with the co-chaperonin GroES.

Its subcellular location is the cytoplasm. The enzyme catalyses ATP + H2O + a folded polypeptide = ADP + phosphate + an unfolded polypeptide.. In terms of biological role, together with its co-chaperonin GroES, plays an essential role in assisting protein folding. The GroEL-GroES system forms a nano-cage that allows encapsulation of the non-native substrate proteins and provides a physical environment optimized to promote and accelerate protein folding. This chain is Chaperonin GroEL 1, found in Syntrophobacter fumaroxidans (strain DSM 10017 / MPOB).